The primary structure comprises 511 residues: Exodeoxyribonuclease 7 large subunit (511 aa).

The protein belongs to the XseA family. In terms of assembly, heterooligomer composed of large and small subunits.

It localises to the cytoplasm. It carries out the reaction Exonucleolytic cleavage in either 5'- to 3'- or 3'- to 5'-direction to yield nucleoside 5'-phosphates.. Functionally, bidirectionally degrades single-stranded DNA into large acid-insoluble oligonucleotides, which are then degraded further into small acid-soluble oligonucleotides. The sequence is that of Exodeoxyribonuclease 7 large subunit from Brucella ovis (strain ATCC 25840 / 63/290 / NCTC 10512).